The sequence spans 873 residues: Ectonucleotide pyrophosphatase/phosphodiesterase family member 3 (873 aa).

Topologically, residues 1-11 are cytoplasmic; the sequence is MESMLTLAMEQ. A helical; Signal-anchor for type II membrane protein transmembrane segment spans residues 12-30; that stretch reads PVKRNTLKKYKIACIVLLA. Topologically, residues 31 to 873 are extracellular; it reads LLVIVSLGLG…TYLPTFETTI (843 aa). SMB domains are found at residues 51 to 93 and 94 to 138; these read QGSC…VEST and RIWM…GETS. 10 cysteine pairs are disulfide-bonded: Cys54/Cys71, Cys58/Cys89, Cys69/Cys82, Cys75/Cys81, Cys98/Cys115, Cys103/Cys133, Cys113/Cys126, Cys119/Cys125, Cys144/Cys190, and Cys152/Cys364. The short motif at 78-80 is the Cell attachment site element; the sequence is RGD. The interval 160 to 544 is phosphodiesterase; that stretch reads PVILFSMDGF…HGSLNHLLKV (385 aa). Asp167 provides a ligand contact to Zn(2+). Lys204 contacts ATP. Thr205 serves as a coordination point for Zn(2+). The active-site Nucleophile is Thr205. Position 226 (Asn226) interacts with ATP. Residue Asn236 is glycosylated (N-linked (GlcNAc...) asparagine). An ATP-binding site is contributed by Glu275. N-linked (GlcNAc...) asparagine glycosylation is present at Asn279. Residue Tyr289 coordinates ATP. N-linked (GlcNAc...) asparagine glycosylation is present at Asn290. Zn(2+) is bound by residues Asp325, His329, Asp372, and His373. 6 disulfide bridges follow: Cys380/Cys477, Cys428/Cys816, Cys561/Cys621, Cys573/Cys677, Cys575/Cys662, and Cys785/Cys795. The N-linked (GlcNAc...) asparagine glycan is linked to Asn425. His482 is a binding site for Zn(2+). 4 N-linked (GlcNAc...) asparagine glycosylation sites follow: Asn532, Asn592, Asn685, and Asn697. The interval 580–873 is nuclease; that stretch reads NSIQLEQVNQ…TYLPTFETTI (294 aa). The Ca(2+) site is built by Asp750, Asn752, Asp754, His756, and Asp758. The N-linked (GlcNAc...) asparagine glycan is linked to Asn787.

As to quaternary structure, monomer and homodimer. Requires Zn(2+) as cofactor. In terms of processing, N-glycosylated. N-glycosylation is necessary for normal transport to the cell membrane, but is not the apical targeting signal.

The protein resides in the cell membrane. Its subcellular location is the apical cell membrane. It localises to the secreted. The enzyme catalyses a ribonucleoside 5'-triphosphate + H2O = a ribonucleoside 5'-phosphate + diphosphate + H(+). It catalyses the reaction ATP + H2O = AMP + diphosphate + H(+). It carries out the reaction CTP + H2O = CMP + diphosphate + H(+). The catalysed reaction is GTP + H2O = GMP + diphosphate + H(+). The enzyme catalyses UTP + H2O = UMP + diphosphate + H(+). It catalyses the reaction UDP-N-acetyl-alpha-D-glucosamine + H2O = N-acetyl-alpha-D-glucosamine 1-phosphate + UMP + 2 H(+). It carries out the reaction P(1),P(3)-bis(5'-adenosyl) triphosphate + H2O = AMP + ADP + 2 H(+). The catalysed reaction is P(1),P(4)-bis(5'-adenosyl) tetraphosphate + H2O = AMP + ATP + 2 H(+). The enzyme catalyses P(1),P(5)-bis(5'-adenosyl) pentaphosphate + H2O = adenosine 5'-tetraphosphate + AMP + 2 H(+). It catalyses the reaction P(1),P(4)-bis(5'-guanosyl) tetraphosphate + H2O = GMP + GTP + 2 H(+). It carries out the reaction Hydrolytically removes 5'-nucleotides successively from the 3'-hydroxy termini of 3'-hydroxy-terminated oligonucleotides.. Hydrolase that metabolizes extracellular nucleotides, including ATP, GTP, UTP and CTP. Limits mast cells and basophils response during inflammation and during the chronic phases of allergic responses by eliminating extracellular ATP, a signaling molecule activating these cells in an autocrine manner. Metabolizes extracellular ATP in the lumen of the small intestine, and thereby prevents ATP-induced apoptosis of intestinal plasmacytoid dendritic cells. Has a broad specificity and can also hydrolyze UDP-GlcNAc into UMP and GlcNAc-1-phosphate and potentially several other intracellular nucleotide sugars, including UDP-GalNAc, CMP-NeuAc, GDP-Fuc, and UDP-GlcA. Thereby, could modulate glycan biosynthesis and protein glycosylation. Can hydrolyze extracellular dinucleoside polyphosphates, including the vasoactive adenosine polyphosphates as well. In addition, displays an alkaline phosphodiesterase activity in vitro. This is Ectonucleotide pyrophosphatase/phosphodiesterase family member 3 from Pongo abelii (Sumatran orangutan).